The following is a 235-amino-acid chain: MNKYMDLKDLQNKIEIKFENIKLLHIALTHSSYANEKKRIQYNERLEFLGDSVLQLVITEYLFMNYKDKSEGELSKKRALIVCENSLFSIAKNLELGEYIKMSKGEELTGGRERISILADAVEALIASIYLDKGIDVVREFILKNFYNIVEKAMKDEIILDYKTKLQEIIQKDGDIQINYILIKHEGPPHRRKFYTEVKIKDNVLGYGIGYSKKESEQNAAKKAIENMEVNKEYE.

In terms of domain architecture, RNase III spans 7 to 134 (LKDLQNKIEI…LIASIYLDKG (128 aa)). Mg(2+) is bound at residue Glu47. Residue Asp51 is part of the active site. 2 residues coordinate Mg(2+): Asp120 and Glu123. Residue Glu123 is part of the active site. Positions 161 to 230 (DYKTKLQEII…AKKAIENMEV (70 aa)) constitute a DRBM domain.

This sequence belongs to the ribonuclease III family. Homodimer. Mg(2+) serves as cofactor.

It is found in the cytoplasm. It catalyses the reaction Endonucleolytic cleavage to 5'-phosphomonoester.. In terms of biological role, digests double-stranded RNA. Involved in the processing of primary rRNA transcript to yield the immediate precursors to the large and small rRNAs (23S and 16S). Processes some mRNAs, and tRNAs when they are encoded in the rRNA operon. Processes pre-crRNA and tracrRNA of type II CRISPR loci if present in the organism. In Clostridium tetani (strain Massachusetts / E88), this protein is Ribonuclease 3.